We begin with the raw amino-acid sequence, 136 residues long: Ribulose bisphosphate carboxylase small subunit, chloroplastic 1 (136 aa).

The N-terminal 13 residues, Asn-1–Cys-13, are a transit peptide targeting the chloroplast.

This sequence belongs to the RuBisCO small chain family. Heterohexadecamer of 8 large and 8 small subunits.

It localises to the plastid. The protein resides in the chloroplast. RuBisCO catalyzes two reactions: the carboxylation of D-ribulose 1,5-bisphosphate, the primary event in carbon dioxide fixation, as well as the oxidative fragmentation of the pentose substrate. Both reactions occur simultaneously and in competition at the same active site. Although the small subunit is not catalytic it is essential for maximal activity. The chain is Ribulose bisphosphate carboxylase small subunit, chloroplastic 1 from Pisum sativum (Garden pea).